Consider the following 233-residue polypeptide: Zein-alpha PMS2 (233 aa).

The first 21 residues, Met1–Ala21, serve as a signal peptide directing secretion.

This sequence belongs to the zein family.

In terms of biological role, zeins are major seed storage proteins. This is Zein-alpha PMS2 (ZMPMS2) from Zea mays (Maize).